A 177-amino-acid polypeptide reads, in one-letter code: Adenine phosphoribosyltransferase (177 aa).

Belongs to the purine/pyrimidine phosphoribosyltransferase family. In terms of assembly, homodimer.

Its subcellular location is the cytoplasm. The enzyme catalyses AMP + diphosphate = 5-phospho-alpha-D-ribose 1-diphosphate + adenine. It functions in the pathway purine metabolism; AMP biosynthesis via salvage pathway; AMP from adenine: step 1/1. In terms of biological role, catalyzes a salvage reaction resulting in the formation of AMP, that is energically less costly than de novo synthesis. The sequence is that of Adenine phosphoribosyltransferase from Chlorobaculum tepidum (strain ATCC 49652 / DSM 12025 / NBRC 103806 / TLS) (Chlorobium tepidum).